The sequence spans 126 residues: Large ribosomal subunit protein bL12 (126 aa).

The protein belongs to the bacterial ribosomal protein bL12 family. Homodimer. Part of the ribosomal stalk of the 50S ribosomal subunit. Forms a multimeric L10(L12)X complex, where L10 forms an elongated spine to which 2 to 4 L12 dimers bind in a sequential fashion. Binds GTP-bound translation factors.

In terms of biological role, forms part of the ribosomal stalk which helps the ribosome interact with GTP-bound translation factors. Is thus essential for accurate translation. This Coxiella burnetii (strain CbuK_Q154) (Coxiella burnetii (strain Q154)) protein is Large ribosomal subunit protein bL12.